Reading from the N-terminus, the 295-residue chain is 4-hydroxy-tetrahydrodipicolinate synthase (295 aa).

T47 contributes to the pyruvate binding site. Y135 acts as the Proton donor/acceptor in catalysis. The active-site Schiff-base intermediate with substrate is the K163. I206 is a pyruvate binding site.

The protein belongs to the DapA family. As to quaternary structure, homodimer.

It is found in the cytoplasm. The catalysed reaction is L-aspartate 4-semialdehyde + pyruvate = (2S,4S)-4-hydroxy-2,3,4,5-tetrahydrodipicolinate + H2O + H(+). The protein operates within amino-acid biosynthesis; L-lysine biosynthesis via DAP pathway; (S)-tetrahydrodipicolinate from L-aspartate: step 3/4. Its activity is regulated as follows. Is not feedback inhibited by lysine. Its function is as follows. Catalyzes the condensation of (S)-aspartate-beta-semialdehyde [(S)-ASA] and pyruvate to 4-hydroxy-tetrahydrodipicolinate (HTPA). The protein is 4-hydroxy-tetrahydrodipicolinate synthase of Staphylococcus aureus (strain COL).